Here is a 380-residue protein sequence, read N- to C-terminus: Carbamoyl phosphate synthase small chain (380 aa).

The interval 1 to 184 (MTTSTRGAHR…EAYVVPAIGE (184 aa)) is CPSase. The L-glutamine site is built by serine 55, glycine 236, and glycine 238. Positions 188-380 (TVAAVDLGIK…FVNLMEGQRA (193 aa)) constitute a Glutamine amidotransferase type-1 domain. Catalysis depends on cysteine 264, which acts as the Nucleophile. L-glutamine contacts are provided by phenylalanine 265, glutamine 268, asparagine 306, glycine 308, and phenylalanine 309. Catalysis depends on residues histidine 354 and glutamate 356.

It belongs to the CarA family. Composed of two chains; the small (or glutamine) chain promotes the hydrolysis of glutamine to ammonia, which is used by the large (or ammonia) chain to synthesize carbamoyl phosphate. Tetramer of heterodimers (alpha,beta)4.

The catalysed reaction is hydrogencarbonate + L-glutamine + 2 ATP + H2O = carbamoyl phosphate + L-glutamate + 2 ADP + phosphate + 2 H(+). It carries out the reaction L-glutamine + H2O = L-glutamate + NH4(+). Its pathway is amino-acid biosynthesis; L-arginine biosynthesis; carbamoyl phosphate from bicarbonate: step 1/1. The protein operates within pyrimidine metabolism; UMP biosynthesis via de novo pathway; (S)-dihydroorotate from bicarbonate: step 1/3. In terms of biological role, small subunit of the glutamine-dependent carbamoyl phosphate synthetase (CPSase). CPSase catalyzes the formation of carbamoyl phosphate from the ammonia moiety of glutamine, carbonate, and phosphate donated by ATP, constituting the first step of 2 biosynthetic pathways, one leading to arginine and/or urea and the other to pyrimidine nucleotides. The small subunit (glutamine amidotransferase) binds and cleaves glutamine to supply the large subunit with the substrate ammonia. The polypeptide is Carbamoyl phosphate synthase small chain (Streptomyces coelicolor (strain ATCC BAA-471 / A3(2) / M145)).